A 203-amino-acid polypeptide reads, in one-letter code: Pacifastin-like protease inhibitor cvp4 (203 aa).

The first 19 residues, 1–19, serve as a signal peptide directing secretion; the sequence is MGFLACALLVVATAHAATA. Pacifastin domains lie at 23–59, 85–121, and 147–184; these read PETCEIGSNFKNYCNNCYCFDGVMDHALCTRESCDRN, DEPCTPGENFKYYCNDCQCLDGLRAHAMCTRMRCDRN, and DESCAPGASFKYYCNSCTCGAEGKVAEAQCTSQECDRY. 6 disulfides stabilise this stretch: C26–C41, C36–C56, C39–C51, C88–C103, C98–C118, and C101–C113. Basic and acidic residues predominate over residues 129–148; sequence RKYPEPEKWNSEKERKKSDE. The segment at 129-150 is disordered; sequence RKYPEPEKWNSEKERKKSDESC. 3 cysteine pairs are disulfide-bonded: C150–C165, C160–C181, and C163–C176.

Belongs to the protease inhibitor I19 family. Expressed by the venom gland.

It is found in the secreted. Inhibits trypsin activity and prophenoloxidase (PPO) activation, an enzyme essential for both clotting and insect innate immune responses. It does not inhibit activity of chymotrypsin and protease K, and has no effect on phenoloxidase (PO) activity. This is Pacifastin-like protease inhibitor cvp4 from Pimpla hypochondriaca (Parasitoid wasp).